A 438-amino-acid polypeptide reads, in one-letter code: tRNA-2-methylthio-N(6)-dimethylallyladenosine synthase (438 aa).

In terms of domain architecture, MTTase N-terminal spans 3 to 123 (KRLFVKTYGC…LPEMVAQAAR (121 aa)). Positions 12, 48, 86, 160, 164, and 167 each coordinate [4Fe-4S] cluster. In terms of domain architecture, Radical SAM core spans 146-374 (HAEGTSAFLS…QALLLDQTMR (229 aa)). One can recognise a TRAM domain in the interval 377–438 (HACVGREMRI…HPNSLEAVPA (62 aa)).

This sequence belongs to the methylthiotransferase family. MiaB subfamily. As to quaternary structure, monomer. [4Fe-4S] cluster serves as cofactor.

It localises to the cytoplasm. The catalysed reaction is N(6)-dimethylallyladenosine(37) in tRNA + (sulfur carrier)-SH + AH2 + 2 S-adenosyl-L-methionine = 2-methylsulfanyl-N(6)-dimethylallyladenosine(37) in tRNA + (sulfur carrier)-H + 5'-deoxyadenosine + L-methionine + A + S-adenosyl-L-homocysteine + 2 H(+). Functionally, catalyzes the methylthiolation of N6-(dimethylallyl)adenosine (i(6)A), leading to the formation of 2-methylthio-N6-(dimethylallyl)adenosine (ms(2)i(6)A) at position 37 in tRNAs that read codons beginning with uridine. This chain is tRNA-2-methylthio-N(6)-dimethylallyladenosine synthase, found in Paramagnetospirillum magneticum (strain ATCC 700264 / AMB-1) (Magnetospirillum magneticum).